The sequence spans 439 residues: Large ribosomal subunit protein mL44 (439 aa).

Disordered stretches follow at residues 39–73 (QSTA…SLPS) and 247–282 (KAME…YGNP). Residues 247–257 (KAMEEQDQDKT) are compositionally biased toward basic and acidic residues. Positions 258–274 (PDEEEAEMVANEQDQDV) are enriched in acidic residues.

The protein belongs to the ribonuclease III family. Mitochondrion-specific ribosomal protein mL44 subfamily. In terms of assembly, component of the mitochondrial large ribosomal subunit (mt-LSU). Mature N.crassa 74S mitochondrial ribosomes consist of a small (37S) and a large (54S) subunit. The 37S small subunit contains a 16S ribosomal RNA (16S mt-rRNA) and 32 different proteins. The 54S large subunit contains a 23S rRNA (23S mt-rRNA) and 42 different proteins. mL44 forms a heterodimer with mL57 and stabilizes rRNA expansion segments 1/2 at a membrane-facing protuberance close to the point of attachment of the ribosome to the translocon in the membrane.

The protein localises to the mitochondrion. Component of the mitochondrial ribosome (mitoribosome), a dedicated translation machinery responsible for the synthesis of mitochondrial genome-encoded proteins, including at least some of the essential transmembrane subunits of the mitochondrial respiratory chain. The mitoribosomes are attached to the mitochondrial inner membrane and translation products are cotranslationally integrated into the membrane. This chain is Large ribosomal subunit protein mL44 (mrpl3), found in Neurospora crassa (strain ATCC 24698 / 74-OR23-1A / CBS 708.71 / DSM 1257 / FGSC 987).